A 302-amino-acid chain; its full sequence is Protein transport protein SEC13 homolog A (302 aa).

6 WD repeats span residues Gly9 to His48, Gly54 to Gln95, Asp101 to Thr142, Ala148 to Asp201, Lys208 to Glu251, and Asp257 to Gln296.

This sequence belongs to the WD repeat SEC13 family. Interacts with MAG5, SEC31A and SEC31B.

The protein resides in the golgi apparatus. The protein localises to the endoplasmic reticulum. In terms of biological role, required for protein transport from the endoplasmic reticulum to the Golgi apparatus. This is Protein transport protein SEC13 homolog A from Arabidopsis thaliana (Mouse-ear cress).